A 908-amino-acid chain; its full sequence is MADKTVKELADMVSKTASAVQQQLVDAGLPARAEGDLVTELEQEKLVTYLKQSHGQEEKRRISLKSKTTSTARVTGSSGKSKSVNVEVRKKKVFEKPDPEKMAEELAAREQAMIESQARAAKDAEDRAATKKKSEERQAATLAAMRASLGSSKKSDDKNDDISTSVVVKKGGKTTIEVKPKEQPKKKVAATKPKVETAVERKAREVREKEEARLREIETETRRTQAEEAQKRTLEQMRKMAGQYTDQPATEVRKDEPLAEGLVGDALEESFEKERREIKRGTSSTTARGRGRRKNQDEREIKNRKNGLRSSQSAQHKFEKPVEKIVYDVEISEQITVSDLAQRMAVKAREVTKLLMKMGEIARESDTIDQATASLIVEEMGHNPVPVSDTKVEDDLQDAADERSSNVQTRPPVVTIMGHVDHGKTSLLDKIRETKVATGEAGGITQHIGAYHVKTARGVITFLDTPGHAAFSAMRSRGAQATDIVVLVVAADDGMMPQTEEAIDHARAAGTPLIVAINKMDKPSADPDRVLNELTAKEVVSEEWGGDTPMARISAKTGDGIDELLELISLQAELMELEAPLDGPAQGVVIESRLEKGRGPVVSVLVKKGTLKQGDLVLAGEHYGKVRAMTDEHGQRIQSAGPSIPVEILGLPETPAAGSEFLVLTDEKKAREVADFRTNRERERQLERQNAMRLESMFDQMEQGNVSYLNIVLKTDVRGSLEALLSALNELSTDEVKVRVISSGVGPISESDVTLAESSEAVLLGFNVRADATARRKSDTANMDIRYYSVIYGLIDDVKAAMSGMLAPEHREKILGVADVREVFRSSKFGAAAGCMVVEGTIYRNKPIRVLRNDQVIFTGQLQSLRRYKEDVNEVRTGMECGLAVRGYDVEAGDKIEVFEIQEFARTI.

Disordered regions lie at residues 52–229 and 241–316; these read QSHG…AEEA and AGQY…SAQH. Over residues 65-84 the composition is skewed to polar residues; sequence KSKTTSTARVTGSSGKSKSV. 6 stretches are compositionally biased toward basic and acidic residues: residues 94-108, 120-138, 176-185, 193-229, 270-280, and 294-303; these read FEKPDPEKMAEELAA, AAKDAEDRAATKKKSEERQ, IEVKPKEQPK, PKVETAVERKAREVREKEEARLREIETETRRTQAEEA, SFEKERREIKR, and KNQDEREIKN. The 170-residue stretch at 409 to 578 folds into the tr-type G domain; that stretch reads TRPPVVTIMG…SLQAELMELE (170 aa). The interval 418-425 is G1; that stretch reads GHVDHGKT. 418-425 contacts GTP; sequence GHVDHGKT. The tract at residues 443–447 is G2; the sequence is GITQH. Positions 464–467 are G3; that stretch reads DTPG. GTP is bound by residues 464–468 and 518–521; these read DTPGH and NKMD. Residues 518–521 are G4; it reads NKMD. Residues 554–556 form a G5 region; it reads SAK.

The protein belongs to the TRAFAC class translation factor GTPase superfamily. Classic translation factor GTPase family. IF-2 subfamily.

Its subcellular location is the cytoplasm. Its function is as follows. One of the essential components for the initiation of protein synthesis. Protects formylmethionyl-tRNA from spontaneous hydrolysis and promotes its binding to the 30S ribosomal subunits. Also involved in the hydrolysis of GTP during the formation of the 70S ribosomal complex. This is Translation initiation factor IF-2 from Psychrobacter arcticus (strain DSM 17307 / VKM B-2377 / 273-4).